The primary structure comprises 247 residues: 2,3-bisphosphoglycerate-dependent phosphoglycerate mutase (247 aa).

Substrate-binding positions include 8–15, 21–22, Arg-60, 87–90, Lys-98, 114–115, and 183–184; these read RHGQSLWN, TG, ERHY, RR, and GN. The Tele-phosphohistidine intermediate role is filled by His-9. The active-site Proton donor/acceptor is the Glu-87.

It belongs to the phosphoglycerate mutase family. BPG-dependent PGAM subfamily.

The catalysed reaction is (2R)-2-phosphoglycerate = (2R)-3-phosphoglycerate. It functions in the pathway carbohydrate degradation; glycolysis; pyruvate from D-glyceraldehyde 3-phosphate: step 3/5. In terms of biological role, catalyzes the interconversion of 2-phosphoglycerate and 3-phosphoglycerate. The chain is 2,3-bisphosphoglycerate-dependent phosphoglycerate mutase from Hydrogenobaculum sp. (strain Y04AAS1).